A 350-amino-acid chain; its full sequence is UDP-N-acetylenolpyruvoylglucosamine reductase (350 aa).

The FAD-binding PCMH-type domain maps to 24 to 195; it reads HVDATARWLL…VAVEFNLPLL (172 aa). Arginine 172 is a catalytic residue. Residue serine 245 is the Proton donor of the active site. Glutamate 342 is a catalytic residue.

It belongs to the MurB family. FAD serves as cofactor.

The protein localises to the cytoplasm. It catalyses the reaction UDP-N-acetyl-alpha-D-muramate + NADP(+) = UDP-N-acetyl-3-O-(1-carboxyvinyl)-alpha-D-glucosamine + NADPH + H(+). Its pathway is cell wall biogenesis; peptidoglycan biosynthesis. In terms of biological role, cell wall formation. The protein is UDP-N-acetylenolpyruvoylglucosamine reductase of Xanthomonas campestris pv. campestris (strain B100).